Consider the following 450-residue polypeptide: C4-dicarboxylate transport protein (450 aa).

Transmembrane regions (helical) follow at residues 25 to 45 (VVFA…YGAA), 56 to 76 (LIKM…IASM), 90 to 110 (MAYF…VANV), 162 to 182 (ILQV…VGDA), 200 to 220 (LVNI…AFTI), 234 to 254 (LVLT…GAVA), 319 to 339 (IYMT…LTLG), and 367 to 387 (AATL…ILGV).

The protein belongs to the dicarboxylate/amino acid:cation symporter (DAACS) (TC 2.A.23) family.

Its subcellular location is the cell inner membrane. In terms of biological role, responsible for the transport of dicarboxylates such as succinate, fumarate, and malate from the periplasm across the membrane. This Acidovorax sp. (strain JS42) protein is C4-dicarboxylate transport protein.